The sequence spans 276 residues: MRPDPAPLDPTDASPAQARRHQPGLGVEVSAGAHRSGDRVRRGVVSFVRRSPRMNVSQQRAMNTLASTYLIDVPRDATSTSVAPGSRLDLPAIFGRTAPLTVEIGVGSGDVLAALAAAHPERDFIGFEVYLPSIATTLNKLENAGASNARVIMADATAGLDHLFGPADLDELWTFFADPWHKKRHHKRRIVNPDTARLVTSRLRPGGLWRLATDWDDYAHWMLEVLSAEPLLKPVDAGPDGFSPRWPERPVTRYENKGLTAGRTIHDLTWRRVDES.

The tract at residues 1–23 (MRPDPAPLDPTDASPAQARRHQP) is disordered. Glu-103, Glu-128, Asp-155, and Asp-178 together coordinate S-adenosyl-L-methionine. Asp-178 is an active-site residue. Substrate is bound by residues Lys-182, Asp-214, and 252–255 (TRYE).

The protein belongs to the class I-like SAM-binding methyltransferase superfamily. TrmB family.

The catalysed reaction is guanosine(46) in tRNA + S-adenosyl-L-methionine = N(7)-methylguanosine(46) in tRNA + S-adenosyl-L-homocysteine. It functions in the pathway tRNA modification; N(7)-methylguanine-tRNA biosynthesis. Functionally, catalyzes the formation of N(7)-methylguanine at position 46 (m7G46) in tRNA. This chain is tRNA (guanine-N(7)-)-methyltransferase, found in Cutibacterium acnes (strain DSM 16379 / KPA171202) (Propionibacterium acnes).